Consider the following 429-residue polypeptide: TNFAIP3-interacting protein 2 (429 aa).

Position 7 is a phosphoserine (S7). A coiled-coil region spans residues 29-117 (QRLRRLQDQL…MQQLLSQPQH (89 aa)). A compositionally biased stretch (basic and acidic residues) spans 177–195 (HAQRNVGERSPDQSEHTDG). The interval 177-199 (HAQRNVGERSPDQSEHTDGHTSV) is disordered. Coiled coils occupy residues 196–226 (HTSV…LNAK) and 255–340 (ELMR…QVSW). Positions 289-347 (RDAALERVQMLEQQILAYKDDFMSERADRERAQSRIQELEEKVASLLHQVSWRQDSREP) are ubiquitin-binding domain (UBD). The tract at residues 372–400 (PGGWRPGTGSQQPEPPAEGGHPGAAQRGQ) is disordered. Residues 388–397 (AEGGHPGAAQ) are compositionally biased toward low complexity. The segment at 397–429 (QRGQGDLQCPHCLQCFSDEQGEELLRHVAECCQ) adopts a CCHC NOA-type zinc-finger fold. Zn(2+)-binding residues include C405, C408, H423, and C427.

In terms of assembly, interacts with STK11/LKB1, TNFAIP3, IKBKG, NFKB1, MAP3K8, TEK, RIPK1, CHUK, IKBKB and SMARCD1. Interacts with polyubiquitin. (Microbial infection) Interacts with severe fever with thrombocytopenia syndrome virus (SFTSV) NSs; this interaction promotes TPL2 complex formation and signaling activity leading to IL-10 production. In vitro phosphorylated by CHUK. In terms of processing, ubiquitinated; undergoes 'Lys-48'-linked polyubiquitination probably leading to constitutive proteasomal degradation which can be impaired by IKK-A/CHUK or IKBKB probably involving deubiquitination. Deubiquitinated by USP35; leading to stabilization and inhibition of TNFalpha-induced NF-kappa-B activation. Ubiquitously expressed in all tissues examined.

The protein localises to the cytoplasm. It localises to the nucleus. Functionally, inhibits NF-kappa-B activation by blocking the interaction of RIPK1 with its downstream effector NEMO/IKBKG. Forms a ternary complex with NFKB1 and MAP3K8 but appears to function upstream of MAP3K8 in the TLR4 signaling pathway that regulates MAP3K8 activation. Involved in activation of the MEK/ERK signaling pathway during innate immune response; this function seems to be stimulus- and cell type specific. Required for stability of MAP3K8. Involved in regulation of apoptosis in endothelial cells; promotes TEK agonist-stimulated endothelial survival. May act as transcriptional coactivator when translocated to the nucleus. Enhances CHUK-mediated NF-kappa-B activation involving NF-kappa-B p50-p65 and p50-c-Rel complexes. In Homo sapiens (Human), this protein is TNFAIP3-interacting protein 2.